We begin with the raw amino-acid sequence, 340 residues long: MSEKNAYAKSGVDVEAGYEVVERIKKHVARTERAGVMGALGGFGGMFDLSKTGVREPVLVSGTDGVGTKLMLAIKYQQHDTIGQDCVAMCVNDIIAAGAEPLYFLDYVATGKNEPAKLEQVVAGVAEGCVQAGAALIGGETAEMPGMYGEDDYDLAGFAVGVAEKSQIIDGSKVKEGDILLGLASSGIHSNGYSLVRRVFADYTGNEVLPELEGKQLKDVLLEPTRIYVKAVLPLIKEELVNGIAHITGGGFIENVPRMFADDLAAEIDEDKVPVLPIFNAIEKYGDIKHEEMFEIFNMGVGLMLAVSPENVNRVKELLDEPVYEIGRIIKKADDSVVIK.

This sequence belongs to the AIR synthase family.

It localises to the cytoplasm. The enzyme catalyses 2-formamido-N(1)-(5-O-phospho-beta-D-ribosyl)acetamidine + ATP = 5-amino-1-(5-phospho-beta-D-ribosyl)imidazole + ADP + phosphate + H(+). It participates in purine metabolism; IMP biosynthesis via de novo pathway; 5-amino-1-(5-phospho-D-ribosyl)imidazole from N(2)-formyl-N(1)-(5-phospho-D-ribosyl)glycinamide: step 2/2. This is Phosphoribosylformylglycinamidine cyclo-ligase from Streptococcus agalactiae serotype Ia (strain ATCC 27591 / A909 / CDC SS700).